We begin with the raw amino-acid sequence, 372 residues long: Carbamoyl phosphate synthase small chain (372 aa).

The interval 1–184 (MKAYIYLEND…SFQKFNDAKR (184 aa)) is CPSase. L-glutamine contacts are provided by serine 45, glycine 240, and glycine 242. The 185-residue stretch at 188-372 (KVAVIDYGVK…YIFKEFMNLM (185 aa)) folds into the Glutamine amidotransferase type-1 domain. Cysteine 268 (nucleophile) is an active-site residue. L-glutamine-binding residues include leucine 269, glutamine 272, asparagine 310, and tyrosine 313. Active-site residues include histidine 351 and glutamate 353.

This sequence belongs to the CarA family. Composed of two chains; the small (or glutamine) chain promotes the hydrolysis of glutamine to ammonia, which is used by the large (or ammonia) chain to synthesize carbamoyl phosphate. Tetramer of heterodimers (alpha,beta)4.

It catalyses the reaction hydrogencarbonate + L-glutamine + 2 ATP + H2O = carbamoyl phosphate + L-glutamate + 2 ADP + phosphate + 2 H(+). The catalysed reaction is L-glutamine + H2O = L-glutamate + NH4(+). Its pathway is amino-acid biosynthesis; L-arginine biosynthesis; carbamoyl phosphate from bicarbonate: step 1/1. The protein operates within pyrimidine metabolism; UMP biosynthesis via de novo pathway; (S)-dihydroorotate from bicarbonate: step 1/3. Functionally, small subunit of the glutamine-dependent carbamoyl phosphate synthetase (CPSase). CPSase catalyzes the formation of carbamoyl phosphate from the ammonia moiety of glutamine, carbonate, and phosphate donated by ATP, constituting the first step of 2 biosynthetic pathways, one leading to arginine and/or urea and the other to pyrimidine nucleotides. The small subunit (glutamine amidotransferase) binds and cleaves glutamine to supply the large subunit with the substrate ammonia. This chain is Carbamoyl phosphate synthase small chain, found in Campylobacter jejuni subsp. jejuni serotype O:2 (strain ATCC 700819 / NCTC 11168).